The sequence spans 110 residues: Translation initiation factor 1A 3 (110 aa).

The segment at 1–29 is disordered; that stretch reads MIRKRQSGSNKSVSSGNNQEVTRVRTPRK. Residues 7–18 show a composition bias toward low complexity; that stretch reads SGSNKSVSSGNN. One can recognise an S1-like domain in the interval 22–96; the sequence is TRVRTPRKDR…SKADVIWKYT (75 aa).

This sequence belongs to the eIF-1A family.

Functionally, seems to be required for maximal rate of protein biosynthesis. Enhances ribosome dissociation into subunits and stabilizes the binding of the initiator Met-tRNA(I) to 40 S ribosomal subunits. The chain is Translation initiation factor 1A 3 (eIF1A3) from Methanosarcina acetivorans (strain ATCC 35395 / DSM 2834 / JCM 12185 / C2A).